The primary structure comprises 367 residues: MASQSVAGIGGRTAAGEARAASPESRRMVAIWLFVSFALIVEMFGIGAYVQNMNAGLSIMAWQPVSGVIPPLTHAAWERMFALYKTIPQYKELNRGMDLAGFKAIFWPEWIHRMWGRLLGFDFGVPLVWFLWTGRIERRLRPWLVTLFVLGGVQGLIGWWMVASGFQPGLTEVSVFRLSVHYCFATLLAIAVFATALTVLKPAETRLPPEEAARYAGARRMAMGSIVLISIAIVAGTFLSGTHAYTIDNTFPLMQGRWVPPDYAALHPFWKNFFLNKAATQFDHRLLGTVAAVGVLAAVVAAIRADLPARARDAFLVMGALLIVQYILGVTTLVSKILDIGIVHQLNAVLLLAAAVWAWFELRGRPA.

5 consecutive transmembrane segments (helical) span residues 28–48 (MVAI…GIGA), 114–134 (MWGR…LWTG), 143–163 (WLVT…WMVA), 180–200 (VHYC…LTVL), and 221–241 (MAMG…FLSG). Heme is bound at residue H284. 3 helical membrane passes run 286–306 (LLGT…IRAD), 314–334 (AFLV…TTLV), and 340–360 (IGIV…WAWF). Residue H344 participates in heme binding.

The protein belongs to the COX15/CtaA family. Type 2 subfamily. Interacts with CtaB. Heme b is required as a cofactor.

It localises to the cell membrane. It catalyses the reaction Fe(II)-heme o + 2 A + H2O = Fe(II)-heme a + 2 AH2. It participates in porphyrin-containing compound metabolism; heme A biosynthesis; heme A from heme O: step 1/1. Its function is as follows. Catalyzes the conversion of heme O to heme A by two successive hydroxylations of the methyl group at C8. The first hydroxylation forms heme I, the second hydroxylation results in an unstable dihydroxymethyl group, which spontaneously dehydrates, resulting in the formyl group of heme A. The protein is Heme A synthase 2 of Acidiphilium cryptum (strain JF-5).